Here is a 63-residue protein sequence, read N- to C-terminus: Chromatin protein Cren7 (63 aa).

It belongs to the Cren7 family. As to quaternary structure, monomer. Methylated at multiple sites, to varying extents.

Its subcellular location is the chromosome. The protein resides in the cytoplasm. In terms of biological role, a chromatin protein, binds double-stranded DNA without sequence specificity. Constrains negative DNA supercoils. This Pyrobaculum calidifontis (strain DSM 21063 / JCM 11548 / VA1) protein is Chromatin protein Cren7.